Reading from the N-terminus, the 461-residue chain is Signal recognition particle receptor FtsY (461 aa).

The TPR repeat unit spans residues 105–138; sequence FESLYNVAKIYHQLEKPDKALEYAQRAEKLVPYE. GTP contacts are provided by residues 267–274, 349–353, and 413–416; these read GVNGSGKT, DTAGR, and TKLD.

The protein belongs to the GTP-binding SRP family. FtsY subfamily. In terms of assembly, part of the signal recognition particle protein translocation system, which is composed of SRP and FtsY.

The protein localises to the cell inner membrane. It localises to the cytoplasm. The catalysed reaction is GTP + H2O = GDP + phosphate + H(+). In terms of biological role, involved in targeting and insertion of nascent membrane proteins into the cytoplasmic membrane. Acts as a receptor for the complex formed by the signal recognition particle (SRP) and the ribosome-nascent chain (RNC). In Aquifex aeolicus (strain VF5), this protein is Signal recognition particle receptor FtsY.